We begin with the raw amino-acid sequence, 402 residues long: Type II NADH:quinone oxidoreductase (402 aa).

FAD contacts are provided by residues 12-16 (GAGYA), 39-40 (NK), and Val83. Residue Glu172 is part of the active site. FAD contacts are provided by residues Asp302, 319-320 (AQ), and Lys379.

This sequence belongs to the NADH dehydrogenase family. FAD serves as cofactor.

Its subcellular location is the cell membrane. The enzyme catalyses a quinone + NADH + H(+) = a quinol + NAD(+). Functionally, alternative, nonproton pumping NADH:quinone oxidoreductase that delivers electrons to the respiratory chain by oxidation of NADH and reduction of quinones, and contributes to the regeneration of NAD(+). The chain is Type II NADH:quinone oxidoreductase from Staphylococcus epidermidis (strain ATCC 35984 / DSM 28319 / BCRC 17069 / CCUG 31568 / BM 3577 / RP62A).